A 211-amino-acid chain; its full sequence is Large ribosomal subunit protein uL3 (211 aa).

Positions 130–139 (QDATHGNSLS) are enriched in polar residues. The segment at 130 to 151 (QDATHGNSLSHRAPGSIGQNQT) is disordered. Gln150 bears the N5-methylglutamine mark.

Belongs to the universal ribosomal protein uL3 family. In terms of assembly, part of the 50S ribosomal subunit. Forms a cluster with proteins L14 and L19. Methylated by PrmB.

Its function is as follows. One of the primary rRNA binding proteins, it binds directly near the 3'-end of the 23S rRNA, where it nucleates assembly of the 50S subunit. This is Large ribosomal subunit protein uL3 from Alcanivorax borkumensis (strain ATCC 700651 / DSM 11573 / NCIMB 13689 / SK2).